Here is a 140-residue protein sequence, read N- to C-terminus: TGEKPFTCKECSKSFSSNSHLSRHQKIHSGVKSFTCTECDKKFLTRSSLLLHQKVHTGEKPFICTECGKGFSAKSQLHRHHVIHTGDRPFTCAECGKTFSYKQSLVTHRAAHTREKPFICTECGKSFSHKNNLQTHLKSH.

5 consecutive C2H2-type zinc fingers follow at residues 6 to 28 (FTCKECSKSFSSNSHLSRHQKIH), 34 to 56 (FTCTECDKKFLTRSSLLLHQKVH), 62 to 84 (FICTECGKGFSAKSQLHRHHVIH), 90 to 112 (FTCAECGKTFSYKQSLVTHRAAH), and 118 to 140 (FICTECGKSFSHKNNLQTHLKSH).

The protein belongs to the krueppel C2H2-type zinc-finger protein family.

The protein localises to the nucleus. Functionally, may be involved in transcriptional regulation. This chain is Oocyte zinc finger protein XlCOF15, found in Xenopus laevis (African clawed frog).